Reading from the N-terminus, the 433-residue chain is Phosphomethylpyrimidine synthase (433 aa).

Substrate contacts are provided by residues Asn-69, Met-98, Tyr-127, His-163, 185-187 (SRG), 226-229 (DALR), and Glu-265. His-269 contacts Zn(2+). Tyr-292 is a substrate binding site. Residue His-333 coordinates Zn(2+). Cys-409, Cys-412, and Cys-416 together coordinate [4Fe-4S] cluster.

The protein belongs to the ThiC family. [4Fe-4S] cluster serves as cofactor.

It carries out the reaction 5-amino-1-(5-phospho-beta-D-ribosyl)imidazole + S-adenosyl-L-methionine = 4-amino-2-methyl-5-(phosphooxymethyl)pyrimidine + CO + 5'-deoxyadenosine + formate + L-methionine + 3 H(+). It participates in cofactor biosynthesis; thiamine diphosphate biosynthesis. Functionally, catalyzes the synthesis of the hydroxymethylpyrimidine phosphate (HMP-P) moiety of thiamine from aminoimidazole ribotide (AIR) in a radical S-adenosyl-L-methionine (SAM)-dependent reaction. The polypeptide is Phosphomethylpyrimidine synthase (Finegoldia magna (strain ATCC 29328 / DSM 20472 / WAL 2508) (Peptostreptococcus magnus)).